A 237-amino-acid chain; its full sequence is Probable transcriptional regulatory protein Bpro_2928 (237 aa).

The protein belongs to the TACO1 family.

The protein resides in the cytoplasm. In Polaromonas sp. (strain JS666 / ATCC BAA-500), this protein is Probable transcriptional regulatory protein Bpro_2928.